Consider the following 1026-residue polypeptide: Translation initiation factor IF-2, chloroplastic (1026 aa).

Residues Met1 to Ser63 constitute a chloroplast transit peptide. Positions Ala158 to Glu173 are enriched in basic and acidic residues. 3 disordered regions span residues Ala158–Ser208, Phe230–Lys284, and Val300–Lys393. Positions Ser178–Asn194 are enriched in polar residues. Positions Leu254–Pro269 are enriched in pro residues. Basic and acidic residues predominate over residues Ser306–Leu317. Over residues Ser384 to Lys393 the composition is skewed to basic residues. The tr-type G domain maps to Asp499–Lys672. The interval Gly508–Thr515 is G1. A GTP-binding site is contributed by Gly508–Thr515. Residues Gly533 to Gly537 are G2. The interval Asp558–Gly561 is G3. GTP contacts are provided by residues Asp558–His562 and Asn612–Asp615. Positions Asn612–Asp615 are G4. The segment at Ser648 to Leu650 is G5.

Belongs to the TRAFAC class translation factor GTPase superfamily. Classic translation factor GTPase family. IF-2 subfamily.

The protein resides in the plastid. It is found in the chloroplast. One of the essential components for the initiation of protein synthesis. Protects formylmethionyl-tRNA from spontaneous hydrolysis and promotes its binding to the 30S ribosomal subunits. Also involved in the hydrolysis of GTP during the formation of the 70S ribosomal complex. The chain is Translation initiation factor IF-2, chloroplastic from Arabidopsis thaliana (Mouse-ear cress).